A 185-amino-acid polypeptide reads, in one-letter code: Ribosome-recycling factor (185 aa).

Belongs to the RRF family.

It localises to the cytoplasm. Functionally, responsible for the release of ribosomes from messenger RNA at the termination of protein biosynthesis. May increase the efficiency of translation by recycling ribosomes from one round of translation to another. In Streptococcus pneumoniae serotype 19F (strain G54), this protein is Ribosome-recycling factor.